The following is a 130-amino-acid chain: Transcription antitermination protein NusB (130 aa).

It belongs to the NusB family.

Its function is as follows. Involved in transcription antitermination. Required for transcription of ribosomal RNA (rRNA) genes. Binds specifically to the boxA antiterminator sequence of the ribosomal RNA (rrn) operons. The protein is Transcription antitermination protein NusB of Sulfurovum sp. (strain NBC37-1).